We begin with the raw amino-acid sequence, 111 residues long: Inner membrane protein H108R (111 aa).

Residues 10-32 (LIVIITILITTRELSTTMLIVSL) form a helical membrane-spanning segment. A glycan (N-linked (GlcNAc...) asparagine; by host) is linked at asparagine 65.

The protein belongs to the asfivirus H108R family.

The protein localises to the virion membrane. The sequence is that of Inner membrane protein H108R from African swine fever virus (isolate Tick/Malawi/Lil 20-1/1983) (ASFV).